The primary structure comprises 312 residues: tRNA dimethylallyltransferase (312 aa).

17-24 (GPTASGKT) provides a ligand contact to ATP. 19 to 24 (TASGKT) provides a ligand contact to substrate. Interaction with substrate tRNA regions lie at residues 42 to 45 (DSAL), 166 to 170 (QRLLR), and 247 to 252 (RCVGYR).

It belongs to the IPP transferase family. In terms of assembly, monomer. Mg(2+) serves as cofactor.

It carries out the reaction adenosine(37) in tRNA + dimethylallyl diphosphate = N(6)-dimethylallyladenosine(37) in tRNA + diphosphate. Functionally, catalyzes the transfer of a dimethylallyl group onto the adenine at position 37 in tRNAs that read codons beginning with uridine, leading to the formation of N6-(dimethylallyl)adenosine (i(6)A). This chain is tRNA dimethylallyltransferase, found in Sodalis glossinidius (strain morsitans).